The sequence spans 79 residues: MPNPGNVIGGHKAALHNPNVSEETKQREKEYLEEHEGEVGEEHQKNTGNVRGGYKAAMHNPNVSGEAKQRAQEELENLE.

The interval 1-79 is disordered; the sequence is MPNPGNVIGG…RAQEELENLE (79 aa). Positions 22–45 are enriched in basic and acidic residues; that stretch reads EETKQREKEYLEEHEGEVGEEHQK.

Belongs to the UPF0654 (con-6) family.

In Schizosaccharomyces pombe (strain 972 / ATCC 24843) (Fission yeast), this protein is UPF0654 protein C11D3.01c.